A 643-amino-acid chain; its full sequence is MEAVVNSDVFLTSNAGLKSSYTNQTLSLVDEDHIHTSDKSLSCSVCNSLSQIVDDDFISAGARNQRTKPKRAGNNQSQQPIKKDCMVSIDEVASTHDWSTRLRNDGNAIAKYLTTNKYDTSQFTIQDMLNIMNKLNIVRTNRNELFQLLTHVKSTLNNASVSVKCTHPLVLIHSRASPRIGDQLKELDKIYSPSNHHILLSTTRFQSMHFTDMSSSQDLSFIYRKPETNYYIHPILMALFGIKLPALENAYVHGDTYSLIQQLYEFRKVKSYNYMLLVNRLTEDNPIVITGVSDLISTEIQRANMHTMIRKAIMNIIMGIFYCNDDDAVDPHLMKIIHTGCSQVMTDEEQILASILSIVGFRPTLVSVARPINGISYDMKLQAAPYIVVNPMKMITTSDSPISINSKDIYSMAFDGNSGRVVFAPPNIGYGRCSGVTHIDPLGTNVMGSAVHSPVIVNGAMMFYVERRQNKNMFGGECYTGFRSLIDDTPIDVSPEIMLNGIMYRLKSAVCYKLGDQFFDCGSSDIFLKGHYTILFTENGPWMYDLSVFNPGARNARLMRALKNQYKKLSMDSDDGFYEWLNGDGSVFAASKQQMLMNHVANFDDDLLTMEEAMSMISRHCCILIYAQDYDQYISARHITELF.

Residues 1–61 constitute a propeptide that is removed on maturation; it reads MEAVVNSDVF…IVDDDFISAG (61 aa).

Belongs to the orthopoxvirus OPG129 family. The 73-kDa precursor is cleaved to a mature protein of 60 kDa during virion maturation. Proteolytic cleavage of major core proteins OPG129, OPG136, and OPG098, which occurs at a late stage of core formation, is required for production of infectious mature virions (MV).

The protein localises to the virion. Functionally, major component of the virion core that undergoes proteolytic processing during the immature virion (IV) to mature virion (MV) transition. Essential for the formation of a structurally normal core. In Vaccinia virus (strain Western Reserve) (VACV), this protein is Major core protein OPG129 (OPG129).